A 102-amino-acid polypeptide reads, in one-letter code: Small ribosomal subunit protein uS10 (102 aa).

The protein belongs to the universal ribosomal protein uS10 family. Part of the 30S ribosomal subunit.

Involved in the binding of tRNA to the ribosomes. The chain is Small ribosomal subunit protein uS10 from Opitutus terrae (strain DSM 11246 / JCM 15787 / PB90-1).